The primary structure comprises 115 residues: Ribonuclease P protein component (115 aa).

This sequence belongs to the RnpA family. As to quaternary structure, consists of a catalytic RNA component (M1 or rnpB) and a protein subunit.

It carries out the reaction Endonucleolytic cleavage of RNA, removing 5'-extranucleotides from tRNA precursor.. Functionally, RNaseP catalyzes the removal of the 5'-leader sequence from pre-tRNA to produce the mature 5'-terminus. It can also cleave other RNA substrates such as 4.5S RNA. The protein component plays an auxiliary but essential role in vivo by binding to the 5'-leader sequence and broadening the substrate specificity of the ribozyme. In Bacillus cereus (strain ATCC 10987 / NRS 248), this protein is Ribonuclease P protein component.